The primary structure comprises 378 residues: C-type lectin domain family 17, member A (378 aa).

The tract at residues 1-119 (MHNLYSITGY…PPLPCKPRNM (119 aa)) is disordered. The Cytoplasmic portion of the chain corresponds to 1–172 (MHNLYSITGY…GCCQKRWMVY (172 aa)). Composition is skewed to acidic residues over residues 17–27 (MEEEEEDDDYE), 43–53 (MEEEEEDDDYE), and 69–79 (MEEEEEDDDYE). Positions 86 to 101 (KDLPPKPGSSAPPRPP) are enriched in pro residues. Residues 173 to 193 (LCLLVVTSLFLGCLGLTVTLI) traverse the membrane as a helical; Signal-anchor for type II membrane protein segment. The Extracellular portion of the chain corresponds to 194–378 (KYQELMEELR…YWICERKCSC (185 aa)). Asparagine 215 and asparagine 237 each carry an N-linked (GlcNAc...) asparagine glycan. Intrachain disulfides connect cysteine 254/cysteine 265, cysteine 282/cysteine 372, and cysteine 350/cysteine 364. Positions 261-373 (FEGKCYYFSP…CYKTTYWICE (113 aa)) constitute a C-type lectin domain. The N-linked (GlcNAc...) asparagine glycan is linked to asparagine 285. Glutamate 341, asparagine 343, glutamate 348, asparagine 360, and aspartate 361 together coordinate Ca(2+).

As to quaternary structure, oligomer; disulfide-linked. In terms of processing, phosphorylated on tyrosine residues. As to expression, expressed on dividing B-cells of germinal centers in various tissues, including lymph nodes, tonsils, stomach, intestine, appendix and spleen.

Its subcellular location is the membrane. Functionally, cell surface receptor which may be involved in carbohydrate-mediated communication between cells in the germinal center. Binds glycans with terminal alpha-linked mannose or fucose residues. The polypeptide is C-type lectin domain family 17, member A (CLEC17A) (Homo sapiens (Human)).